The chain runs to 1407 residues: DNA-directed RNA polymerase subunit beta' (1407 aa).

Zn(2+) contacts are provided by Cys70, Cys72, Cys85, and Cys88. The Mg(2+) site is built by Asp460, Asp462, and Asp464. Positions 814, 888, 895, and 898 each coordinate Zn(2+).

This sequence belongs to the RNA polymerase beta' chain family. As to quaternary structure, the RNAP catalytic core consists of 2 alpha, 1 beta, 1 beta' and 1 omega subunit. When a sigma factor is associated with the core the holoenzyme is formed, which can initiate transcription. Mg(2+) serves as cofactor. Requires Zn(2+) as cofactor.

It catalyses the reaction RNA(n) + a ribonucleoside 5'-triphosphate = RNA(n+1) + diphosphate. DNA-dependent RNA polymerase catalyzes the transcription of DNA into RNA using the four ribonucleoside triphosphates as substrates. The polypeptide is DNA-directed RNA polymerase subunit beta' (Salmonella paratyphi B (strain ATCC BAA-1250 / SPB7)).